The primary structure comprises 646 residues: Alkyl/aryl-sulfatase BDS1 (646 aa).

M1 is modified (N-acetylmethionine). Zn(2+) is bound by residues H162, H164, D166, H167, E273, E292, and H337.

The protein belongs to the metallo-beta-lactamase superfamily. Type III sulfatase family. Requires Zn(2+) as cofactor.

Functionally, alkyl/aryl-sulfatase. Enables the use of SDS and 4-nitrocatechol as sulfur source. The chain is Alkyl/aryl-sulfatase BDS1 (BDS1) from Saccharomyces cerevisiae (strain ATCC 204508 / S288c) (Baker's yeast).